Consider the following 163-residue polypeptide: Large ribosomal subunit protein bL17 (163 aa).

The segment at 127–163 (KEVKKAKSRRGGKAKKAEGTAPEAPAAESESTTEASE) is disordered. The segment covering 128-140 (EVKKAKSRRGGKA) has biased composition (basic residues). Positions 145–163 (GTAPEAPAAESESTTEASE) are enriched in low complexity.

Belongs to the bacterial ribosomal protein bL17 family. Part of the 50S ribosomal subunit. Contacts protein L32.

In Flavobacterium johnsoniae (strain ATCC 17061 / DSM 2064 / JCM 8514 / BCRC 14874 / CCUG 350202 / NBRC 14942 / NCIMB 11054 / UW101) (Cytophaga johnsonae), this protein is Large ribosomal subunit protein bL17.